A 412-amino-acid polypeptide reads, in one-letter code: Transcription factor IIIA (412 aa).

Residues 20–43 (YLCQYCGISRSKNYLITKHIQSHH) form a C2H2-type 1; degenerate zinc finger. C2H2-type zinc fingers lie at residues 66–88 (HTCQ…MQSH), 94–118 (FTCY…LLTH), and 123–148 (FKCP…KKYH). Residues 144-207 (VKKYHSNDNR…NGNGDSQPAE (64 aa)) are disordered. Basic and acidic residues predominate over residues 148-188 (HSNDNRDKDNTGLGDGDKDNTCKGDDDKEKSGSGGCEKENE). Residue lysine 185 forms a Glycyl lysine isopeptide (Lys-Gly) (interchain with G-Cter in ubiquitin) linkage. The C2H2-type 5 zinc finger occupies 215–239 (VVCKEIGCGKAFKYPSQLQKHQDSH). The C2H2-type 6; degenerate zinc-finger motif lies at 247–272 (AFCSEPGCMKYFTNEECLKSHIRSCH). The C2H2-type 7; degenerate zinc-finger motif lies at 275-296 (INCEICGSKHLKKNIKRHLRTH). Residues 305-330 (IKCEVEGCSSTFSKASNLQKHMKAVH) form a C2H2-type 8 zinc finger. Residues 336-362 (FVCGFPGCGMRFAYKHVRNKHENSGYH) form a C2H2-type 9; degenerate zinc finger. The short motif at 384–391 (LKRKQVTA) is the Nuclear localization signal element.

Post-translationally, protein product TFIIIA (44 kDa) is proteolytically cleaved into TFIIIA-C (34 kDa). Expressed in seedlings, flowers, siliques and seeds.

It is found in the nucleus. The protein localises to the nucleolus. In terms of biological role, essential protein. Isoform 1 is a transcription activator the binds both 5S rDNA and 5S rRNA and stimulates the transcription of 5S rRNA gene. Isoform 1 regulates 5S rRNA levels during development. In Arabidopsis thaliana (Mouse-ear cress), this protein is Transcription factor IIIA.